A 216-amino-acid polypeptide reads, in one-letter code: Glycerol-3-phosphate acyltransferase (216 aa).

5 consecutive transmembrane segments (helical) span residues 5 to 25, 70 to 90, 118 to 138, 140 to 160, and 164 to 184; these read LIAL…FGLV, IAAA…AGAF, VVFW…AAIF, ISSL…LAWG, and VAIM…ANIS. Residues 192-201 are compositionally biased toward basic and acidic residues; it reads PRIGGKKSET. Residues 192 to 216 form a disordered region; it reads PRIGGKKSETSADVSDGDDPDTPAT. The segment covering 206–216 has biased composition (acidic residues); the sequence is SDGDDPDTPAT.

It belongs to the PlsY family. In terms of assembly, probably interacts with PlsX.

Its subcellular location is the cell inner membrane. It catalyses the reaction an acyl phosphate + sn-glycerol 3-phosphate = a 1-acyl-sn-glycero-3-phosphate + phosphate. It participates in lipid metabolism; phospholipid metabolism. Its function is as follows. Catalyzes the transfer of an acyl group from acyl-phosphate (acyl-PO(4)) to glycerol-3-phosphate (G3P) to form lysophosphatidic acid (LPA). This enzyme utilizes acyl-phosphate as fatty acyl donor, but not acyl-CoA or acyl-ACP. The protein is Glycerol-3-phosphate acyltransferase of Maricaulis maris (strain MCS10) (Caulobacter maris).